The primary structure comprises 446 residues: tRNA-2-methylthio-N(6)-dimethylallyladenosine synthase (446 aa).

The MTTase N-terminal domain maps to 2–122 (KKAYVKSYGC…LPDLLRQSRE (121 aa)). Cysteine 11, cysteine 47, cysteine 85, cysteine 157, cysteine 161, and cysteine 164 together coordinate [4Fe-4S] cluster. One can recognise a Radical SAM core domain in the interval 143-375 (RNRGVTGFLT…QDLLDRQRHA (233 aa)). The 63-residue stretch at 378-440 (AASVGTLTEI…SNSLFGETLE (63 aa)) folds into the TRAM domain.

Belongs to the methylthiotransferase family. MiaB subfamily. Monomer. [4Fe-4S] cluster serves as cofactor.

The protein localises to the cytoplasm. The catalysed reaction is N(6)-dimethylallyladenosine(37) in tRNA + (sulfur carrier)-SH + AH2 + 2 S-adenosyl-L-methionine = 2-methylsulfanyl-N(6)-dimethylallyladenosine(37) in tRNA + (sulfur carrier)-H + 5'-deoxyadenosine + L-methionine + A + S-adenosyl-L-homocysteine + 2 H(+). Functionally, catalyzes the methylthiolation of N6-(dimethylallyl)adenosine (i(6)A), leading to the formation of 2-methylthio-N6-(dimethylallyl)adenosine (ms(2)i(6)A) at position 37 in tRNAs that read codons beginning with uridine. The sequence is that of tRNA-2-methylthio-N(6)-dimethylallyladenosine synthase from Methylorubrum extorquens (strain PA1) (Methylobacterium extorquens).